We begin with the raw amino-acid sequence, 1072 residues long: Rho family-interacting cell polarization regulator 2 (1072 aa).

Residues 83 to 112 (NGLDEYLEVHQTELDKLTAQLKDMRRNSRL) adopt a coiled-coil conformation. Residues 173 to 470 (RESLTEINRS…ATTATQHRAR (298 aa)) form a necessary for interaction with NCAM and myoblast protrusion formation region. Disordered stretches follow at residues 439–465 (DRVPPANSAEPSSAHVTSSPDIATTAT) and 683–718 (EVEKNSYRTEHPEARGHLQRSLTEDTGVGTSVAGSP). Polar residues predominate over residues 447 to 460 (AEPSSAHVTSSPDI). The span at 683–698 (EVEKNSYRTEHPEARG) shows a compositional bias: basic and acidic residues.

The protein belongs to the RIPOR family. As to quaternary structure, homooligomer; homooligomerization is regulated by RHOC and leads to the formation of concatemers through the association of N- and C-termini. Interacts with NCAM; this interaction is necessary for myoblast protrusion formation. Expressed in myoblast and myotubes (at protein level). Expressed in brain, eyes and skeletal muscle.

Its subcellular location is the cytoplasm. It localises to the cytoskeleton. The protein resides in the cell projection. It is found in the filopodium. The protein localises to the apical cell membrane. Its subcellular location is the stereocilium. It localises to the stereocilium membrane. Functionally, acts as an inhibitor of the small GTPase RHOA and plays several roles in the regulation of myoblast and hair cell differentiation, lymphocyte T proliferation and neutrophil polarization. Plays a role in fetal mononuclear myoblast differentiation by promoting filopodia and myotube formation. Maintains naive T lymphocytes in a quiescent state and prevents chemokine-induced T lymphocyte responses, such as cell adhesion, polarization and migration. Involved also in the regulation of neutrophil polarization, chemotaxis and adhesion. Required for normal development of inner and outer hair cell stereocilia within the cochlea of the inner ear. Plays a role for maintaining the structural organization of the basal domain of stereocilia. Involved in mechanosensory hair cell function. Required for normal hearing. This is Rho family-interacting cell polarization regulator 2 from Coturnix japonica (Japanese quail).